The following is a 167-amino-acid chain: NADH-quinone oxidoreductase subunit B (167 aa).

C40, C41, C105, and C134 together coordinate [4Fe-4S] cluster.

The protein belongs to the complex I 20 kDa subunit family. In terms of assembly, NDH-1 is composed of 14 different subunits. Subunits NuoB, C, D, E, F, and G constitute the peripheral sector of the complex. Requires [4Fe-4S] cluster as cofactor.

The protein localises to the cell inner membrane. The enzyme catalyses a quinone + NADH + 5 H(+)(in) = a quinol + NAD(+) + 4 H(+)(out). Functionally, NDH-1 shuttles electrons from NADH, via FMN and iron-sulfur (Fe-S) centers, to quinones in the respiratory chain. The immediate electron acceptor for the enzyme in this species is believed to be ubiquinone. Couples the redox reaction to proton translocation (for every two electrons transferred, four hydrogen ions are translocated across the cytoplasmic membrane), and thus conserves the redox energy in a proton gradient. The polypeptide is NADH-quinone oxidoreductase subunit B (Campylobacter jejuni subsp. jejuni serotype O:2 (strain ATCC 700819 / NCTC 11168)).